We begin with the raw amino-acid sequence, 637 residues long: Chaperone protein DnaK (637 aa).

Thr198 is modified (phosphothreonine; by autocatalysis). Residues 597 to 637 (MYAKTSQAGAGPQPGAGPGTGGQGPGKKDEDVVDADFEEVK) form a disordered region. Residues 608–621 (PQPGAGPGTGGQGP) are compositionally biased toward gly residues. Acidic residues predominate over residues 627 to 637 (DVVDADFEEVK).

Belongs to the heat shock protein 70 family.

In terms of biological role, acts as a chaperone. This is Chaperone protein DnaK from Syntrophus aciditrophicus (strain SB).